Reading from the N-terminus, the 225-residue chain is LHFPL tetraspan subfamily member 2a protein (225 aa).

A run of 4 helical transmembrane segments spans residues 11-31 (MLWTLLSIVAAFSELIAFLST), 99-119 (IFLAAGILLLCAVAFISIFTM), 129-149 (IFNVCGLLQAIAGLFLIVGLV), and 178-198 (AGWAFYTALAGTVLCFLCAVF).

This sequence belongs to the LHFP family.

It is found in the membrane. Plays a role in fertility. Involved in distal reproductive tract development. This Danio rerio (Zebrafish) protein is LHFPL tetraspan subfamily member 2a protein.